The following is a 709-amino-acid chain: MLLRLTARSIRRFTTSSSSLPLLSSSSFCTVPTMAANHPKDEAYLSAVIPKRIKLFEQIQANQLENLKSLPHDPIKVTLPDGNVKEGKKWETTPMDIAAQISKGLANSALISAVDDVLWDMNRPLEGDCKLELFKFDSDKGRDTLWHSSAHILGQALEQEYGCQLCIGPCTTRGEGFYYDGFYGELGLSDNHFPSIEAGAAKAAKEAQPFERIEVTKDQALEMFSENNFKVELINGLPADMTITVYRCGPLVDLCRGPHIPNTSFVKAFKCLRASSAYWKGDKDRESLQRVYGISYPDQKQLKKYLQFLEEAKKYDHRLLGQKQELFFSHQLSPGSYFFLPLGTRVYNRLMDFIKNQYWHRGYTEVITPNMYNMELWQTSGHADNYKDNMFTFNIEKQEFGLKPMNCPGHCLIFQHRVRSYRELPMRLADFGVLHRNEASGALSGLTRVRRFQQDDAHIFCTTEQVKGEVQGVLEFIDYVYKVFGFTYELKLSTRPEKYLGDLETWDKAEADLKEAIEAFGKPLVLNEGDGAFYGPKIDITVSDAMNRKFQCATLQLDFQLPIRFNLEYAAEDEAKKSRPVMIHRAVLGSVERMFAILLEHYKGKWPFWISPRQAIVCPISEKSQQYAEKVQKQIKDAGFYVDADLTDRKIDKKVREAQLAQYNYILVVGETEAATGQVSVRVRDNAAHSVKSIEDLLEEFKAKTAEFV.

A mitochondrion-targeting transit peptide spans 1 to 21; it reads MLLRLTARSIRRFTTSSSSLP. The TGS domain maps to 73 to 135; it reads DPIKVTLPDG…EGDCKLELFK (63 aa). Zn(2+)-binding residues include Cys-407, His-458, and His-584.

It belongs to the class-II aminoacyl-tRNA synthetase family.

The protein localises to the mitochondrion. It is found in the cytoplasm. The protein resides in the cytosol. The enzyme catalyses tRNA(Thr) + L-threonine + ATP = L-threonyl-tRNA(Thr) + AMP + diphosphate + H(+). The protein is Threonine--tRNA ligase, mitochondrial 1 of Arabidopsis thaliana (Mouse-ear cress).